Reading from the N-terminus, the 562-residue chain is Protein FAM83D-B (562 aa).

The tract at residues 424-472 (ITTQTTETSQCTTQTPAPTSSVARLSNSSNSSSSSFSSASTTSTGSNCS) is disordered. The segment covering 425 to 472 (TTQTTETSQCTTQTPAPTSSVARLSNSSNSSSSSFSSASTTSTGSNCS) has biased composition (low complexity).

This sequence belongs to the FAM83 family.

Its subcellular location is the cytoplasm. It localises to the cytoskeleton. The protein resides in the spindle. It is found in the spindle pole. In terms of biological role, may regulate cell proliferation, growth, migration and epithelial to mesenchymal transition. May also be important for proper chromosome congression and alignment during mitosis. This Xenopus laevis (African clawed frog) protein is Protein FAM83D-B.